The sequence spans 634 residues: Biosynthetic arginine decarboxylase (634 aa).

At Lys103 the chain carries N6-(pyridoxal phosphate)lysine. 283 to 293 (FDVGGGLGVDY) lines the substrate pocket.

Belongs to the Orn/Lys/Arg decarboxylase class-II family. SpeA subfamily. Requires Mg(2+) as cofactor. Pyridoxal 5'-phosphate is required as a cofactor.

It carries out the reaction L-arginine + H(+) = agmatine + CO2. It participates in amine and polyamine biosynthesis; agmatine biosynthesis; agmatine from L-arginine: step 1/1. Catalyzes the biosynthesis of agmatine from arginine. This chain is Biosynthetic arginine decarboxylase, found in Photorhabdus laumondii subsp. laumondii (strain DSM 15139 / CIP 105565 / TT01) (Photorhabdus luminescens subsp. laumondii).